The following is a 370-amino-acid chain: Holliday junction branch migration complex subunit RuvB (370 aa).

Residues 1 to 182 (MDERMMTSAK…FGVIHRLEYY (182 aa)) are large ATPase domain (RuvB-L). ATP-binding positions include Leu21, Arg22, Gly63, Lys66, Thr67, Thr68, 129 to 131 (EDF), Arg172, Tyr182, and Arg219. Residue Thr67 participates in Mg(2+) binding. The tract at residues 183–253 (RPDELEFIIL…VAREALRRLE (71 aa)) is small ATPAse domain (RuvB-S). Residues 256-370 (PRGLDTTDQR…AEQAALSFDE (115 aa)) form a head domain (RuvB-H) region. Arg311 and Arg316 together coordinate DNA.

The protein belongs to the RuvB family. In terms of assembly, homohexamer. Forms an RuvA(8)-RuvB(12)-Holliday junction (HJ) complex. HJ DNA is sandwiched between 2 RuvA tetramers; dsDNA enters through RuvA and exits via RuvB. An RuvB hexamer assembles on each DNA strand where it exits the tetramer. Each RuvB hexamer is contacted by two RuvA subunits (via domain III) on 2 adjacent RuvB subunits; this complex drives branch migration. In the full resolvosome a probable DNA-RuvA(4)-RuvB(12)-RuvC(2) complex forms which resolves the HJ.

It is found in the cytoplasm. The catalysed reaction is ATP + H2O = ADP + phosphate + H(+). Functionally, the RuvA-RuvB-RuvC complex processes Holliday junction (HJ) DNA during genetic recombination and DNA repair, while the RuvA-RuvB complex plays an important role in the rescue of blocked DNA replication forks via replication fork reversal (RFR). RuvA specifically binds to HJ cruciform DNA, conferring on it an open structure. The RuvB hexamer acts as an ATP-dependent pump, pulling dsDNA into and through the RuvAB complex. RuvB forms 2 homohexamers on either side of HJ DNA bound by 1 or 2 RuvA tetramers; 4 subunits per hexamer contact DNA at a time. Coordinated motions by a converter formed by DNA-disengaged RuvB subunits stimulates ATP hydrolysis and nucleotide exchange. Immobilization of the converter enables RuvB to convert the ATP-contained energy into a lever motion, pulling 2 nucleotides of DNA out of the RuvA tetramer per ATP hydrolyzed, thus driving DNA branch migration. The RuvB motors rotate together with the DNA substrate, which together with the progressing nucleotide cycle form the mechanistic basis for DNA recombination by continuous HJ branch migration. Branch migration allows RuvC to scan DNA until it finds its consensus sequence, where it cleaves and resolves cruciform DNA. The protein is Holliday junction branch migration complex subunit RuvB of Heliobacterium modesticaldum (strain ATCC 51547 / Ice1).